A 76-amino-acid polypeptide reads, in one-letter code: uncharacterized protein (76 aa).

Helical transmembrane passes span Ala9–Val29 and Leu45–Tyr65.

Its subcellular location is the cell membrane. This is an uncharacterized protein from Bacillus subtilis (strain 168).